We begin with the raw amino-acid sequence, 588 residues long: Ankyrin repeat and SOCS box protein 15 (588 aa).

11 ANK repeats span residues 75–104 (KGWFPLHEAVVQPIQQILEVVLDASYKTLW), 110–139 (DGETPLTLAVKAGLVENVRTLLEKGVWPNT), 143–172 (KGETPLLLAIKRGSYDMVSALLKHNTSLDQ), 176–205 (KRWSAMHEAAKQGHKDIIALLLNNGGNVHL), 209–238 (FGVTPLGVAAEYGHCDVLEHLIHKGGDVLA), 242–271 (DGASVLFEAAGGGNPDCISLLLEYGGSGNI), 275–304 (AGHLPIHRAAYEGHYLALKYLIPVTSKHAI), 307–336 (SGLTPIHSAADGQNAQCLELLIENGFDVNS), 349–378 (ERKTALYFAVCNNDILCTEILLAAGADPNL), 379–408 (DPLNCLLVAVRANNHEIVRLLLAHGANVNC), and 416–444 (TRFPSAIQYALNDEVMLRLLLNNGYQVEM). An SOCS box domain is found at 524 to 579 (WPEIRQILENPCSLKHLCRLKIRRLMGLQRLCQPTLMEKLSLPPTIQRYILFKEYD).

This sequence belongs to the ankyrin SOCS box (ASB) family.

It functions in the pathway protein modification; protein ubiquitination. In terms of biological role, may be a substrate-recognition component of a SCF-like ECS (Elongin-Cullin-SOCS-box protein) E3 ubiquitin-protein ligase complex which mediates the ubiquitination and subsequent proteasomal degradation of target proteins. In Bos taurus (Bovine), this protein is Ankyrin repeat and SOCS box protein 15 (ASB15).